We begin with the raw amino-acid sequence, 220 residues long: Cytidylate kinase (220 aa).

An ATP-binding site is contributed by 9-17 (GPAASGKST).

The protein belongs to the cytidylate kinase family. Type 1 subfamily.

Its subcellular location is the cytoplasm. It carries out the reaction CMP + ATP = CDP + ADP. It catalyses the reaction dCMP + ATP = dCDP + ADP. This chain is Cytidylate kinase, found in Thermotoga neapolitana (strain ATCC 49049 / DSM 4359 / NBRC 107923 / NS-E).